A 452-amino-acid chain; its full sequence is GTPase Der (452 aa).

EngA-type G domains are found at residues 4–169 (PVVA…PPQD) and 177–352 (IQMA…EQHR). Residues 10–17 (GRPNVGKS), 57–61 (DTGGL), 120–123 (NKCE), 183–190 (GRPNVGKS), 230–234 (DTAGI), and 295–298 (NKWD) contribute to the GTP site. Residues 353-438 (RRVTTAVVNE…PVRLFWRGKQ (86 aa)) form the KH-like domain.

It belongs to the TRAFAC class TrmE-Era-EngA-EngB-Septin-like GTPase superfamily. EngA (Der) GTPase family. In terms of assembly, associates with the 50S ribosomal subunit.

Its function is as follows. GTPase that plays an essential role in the late steps of ribosome biogenesis. The chain is GTPase Der from Synechococcus sp. (strain RCC307).